The chain runs to 405 residues: Potassium channel subfamily K member 13 (405 aa).

Over 1-19 (MAGRGCSCSPGHLNEDNAR) the chain is Cytoplasmic. Residues 20 to 40 (FLLLAGLILLYLLGGAAVFSA) traverse the membrane as a helical segment. N59 and N65 each carry an N-linked (GlcNAc...) asparagine glycan. Positions 95–115 (WDFTGAFYFVGTVVTTIGFGM) form an intramembrane region, pore-forming. Positions 110, 111, and 112 each coordinate K(+). The selectivity filter 1 stretch occupies residues 110–115 (TIGFGM). Residues 125 to 145 (VFLIFYGLIGCASTILFFNLF) traverse the membrane as a helical segment. Over 146-193 (LERLITVIAYVMRTCHHQQLRRRGTVARDNRKAPRKGEADSLAGWKPS) the chain is Cytoplasmic. Residues 194-214 (VYYVMLILCLASVAISCGASA) traverse the membrane as a helical segment. Residues 224-244 (YFDSVYFCFVASSTIGFGDLV) constitute an intramembrane region (pore-forming). Positions 237, 238, 239, and 240 each coordinate K(+). A selectivity filter 2 region spans residues 237 to 242 (TIGFGD). The chain crosses the membrane as a helical span at residues 263–283 (FFILMGVCCIYSMFNVISILI). Residues 284-405 (KQTVNWILRK…NRLAETSGDR (122 aa)) lie on the Cytoplasmic side of the membrane.

It belongs to the two pore domain potassium channel (TC 1.A.1.8) family. As to quaternary structure, homodimer. Heterodimer with KCNK12. As to expression, ubiquitous. In brain expression is rather low and restricted to the olfactory bulb and tubercle, to the ventromedial hypothalamic nucleus, lateral septal nucleus dorsal, lateral mammillary nucleus, lateral parabrachial nuclei, reticular nucleus and reunions nuclei.

It is found in the cell membrane. The enzyme catalyses K(+)(in) = K(+)(out). The channel currents are activated by arachidonic acid, inhibited by volatile anesthetic halothane, partially inhibited by Ba(2+) ions and only weakly inhibited by extracellular acidification to pH 6. Functionally, k(+) channel that conducts outward rectifying tonic currents potentiated by purinergic signals. Homo- and heterodimerizes to form functional channels with distinct regulatory and gating properties. Contributes most of K(+) currents at the plasma membrane of resting microglia. Maintains a depolarized membrane potential required for proper ramified microglia morphology and phagocytosis, selectively mediating microglial pruning of presynaptic compartments at hippocampal excitatory synapses. Upon local release of ATP caused by neuronal injury or infection, it is potentiated by P2RY12 and P2RX7 receptor signaling and contributes to ATP-triggered K(+) efflux underlying microglial NLRP3 inflammasome assembly and IL1B release. The polypeptide is Potassium channel subfamily K member 13 (Rattus norvegicus (Rat)).